A 285-amino-acid polypeptide reads, in one-letter code: Lipoyl synthase (285 aa).

[4Fe-4S] cluster-binding residues include cysteine 36, cysteine 41, cysteine 47, cysteine 62, cysteine 66, cysteine 69, and serine 275. The region spanning 48 to 264 (FSKKTATFLI…KEYAISIGFK (217 aa)) is the Radical SAM core domain.

Belongs to the radical SAM superfamily. Lipoyl synthase family. It depends on [4Fe-4S] cluster as a cofactor.

It is found in the cytoplasm. It catalyses the reaction [[Fe-S] cluster scaffold protein carrying a second [4Fe-4S](2+) cluster] + N(6)-octanoyl-L-lysyl-[protein] + 2 oxidized [2Fe-2S]-[ferredoxin] + 2 S-adenosyl-L-methionine + 4 H(+) = [[Fe-S] cluster scaffold protein] + N(6)-[(R)-dihydrolipoyl]-L-lysyl-[protein] + 4 Fe(3+) + 2 hydrogen sulfide + 2 5'-deoxyadenosine + 2 L-methionine + 2 reduced [2Fe-2S]-[ferredoxin]. The protein operates within protein modification; protein lipoylation via endogenous pathway; protein N(6)-(lipoyl)lysine from octanoyl-[acyl-carrier-protein]: step 2/2. Functionally, catalyzes the radical-mediated insertion of two sulfur atoms into the C-6 and C-8 positions of the octanoyl moiety bound to the lipoyl domains of lipoate-dependent enzymes, thereby converting the octanoylated domains into lipoylated derivatives. This Caldicellulosiruptor saccharolyticus (strain ATCC 43494 / DSM 8903 / Tp8T 6331) protein is Lipoyl synthase.